The primary structure comprises 266 residues: F-actin-capping protein subunit alpha (266 aa).

It belongs to the F-actin-capping protein alpha subunit family. As to quaternary structure, heterodimer of an alpha and a beta subunit.

The protein resides in the cytoplasm. It localises to the cytoskeleton. Functionally, F-actin-capping proteins bind in a Ca(2+)-independent manner to the fast growing ends of actin filaments (barbed end) thereby blocking the exchange of subunits at these ends. Unlike other capping proteins (such as gelsolin and severin), these proteins do not sever actin filaments. The sequence is that of F-actin-capping protein subunit alpha (CAP1) from Debaryomyces hansenii (strain ATCC 36239 / CBS 767 / BCRC 21394 / JCM 1990 / NBRC 0083 / IGC 2968) (Yeast).